We begin with the raw amino-acid sequence, 29 residues long: U20-ctenitoxin-Co1a (29 aa).

2 disulfides stabilise this stretch: Cys-3–Cys-16 and Cys-10–Cys-21.

As to expression, expressed by the venom gland.

It is found in the secreted. The protein is U20-ctenitoxin-Co1a of Ctenus ornatus (Brazilian spider).